Consider the following 201-residue polypeptide: NADH-quinone oxidoreductase subunit C 1 (201 aa).

The protein belongs to the complex I 30 kDa subunit family. In terms of assembly, NDH-1 is composed of 14 different subunits. Subunits NuoB, C, D, E, F, and G constitute the peripheral sector of the complex.

It is found in the cell inner membrane. The catalysed reaction is a quinone + NADH + 5 H(+)(in) = a quinol + NAD(+) + 4 H(+)(out). Functionally, NDH-1 shuttles electrons from NADH, via FMN and iron-sulfur (Fe-S) centers, to quinones in the respiratory chain. The immediate electron acceptor for the enzyme in this species is believed to be ubiquinone. Couples the redox reaction to proton translocation (for every two electrons transferred, four hydrogen ions are translocated across the cytoplasmic membrane), and thus conserves the redox energy in a proton gradient. The chain is NADH-quinone oxidoreductase subunit C 1 from Rhizobium meliloti (strain 1021) (Ensifer meliloti).